A 581-amino-acid polypeptide reads, in one-letter code: Serine/threonine-protein kinase SSN3 (581 aa).

The disordered stretch occupies residues 34-57; sequence LWSQQQQQQLLDTKGSASTSKSPM. Positions 48–57 are enriched in polar residues; the sequence is GSASTSKSPM. Residues 85–475 enclose the Protein kinase domain; that stretch reads YEIIGYIAAG…AIDALEHEYF (391 aa). ATP-binding positions include 91–99 and Lys195; that span reads IAAGTYGKV. Asp298 (proton acceptor) is an active-site residue.

This sequence belongs to the protein kinase superfamily. CMGC Ser/Thr protein kinase family. CDC2/CDKX subfamily. Component of the SRB8-11 complex, a regulatory module of the Mediator complex. The cofactor is Mg(2+).

The protein resides in the nucleus. The enzyme catalyses L-seryl-[protein] + ATP = O-phospho-L-seryl-[protein] + ADP + H(+). The catalysed reaction is L-threonyl-[protein] + ATP = O-phospho-L-threonyl-[protein] + ADP + H(+). It carries out the reaction [DNA-directed RNA polymerase] + ATP = phospho-[DNA-directed RNA polymerase] + ADP + H(+). In terms of biological role, component of the SRB8-11 complex. The SRB8-11 complex is a regulatory module of the Mediator complex which is itself involved in regulation of basal and activated RNA polymerase II-dependent transcription. The SRB8-11 complex may be involved in the transcriptional repression of a subset of genes regulated by Mediator. It may inhibit the association of the Mediator complex with RNA polymerase II to form the holoenzyme complex. The SRB8-11 complex phosphorylates the C-terminal domain (CTD) of the largest subunit of RNA polymerase II. The sequence is that of Serine/threonine-protein kinase SSN3 (SSN3) from Eremothecium gossypii (strain ATCC 10895 / CBS 109.51 / FGSC 9923 / NRRL Y-1056) (Yeast).